The sequence spans 101 residues: Small ribosomal subunit protein uS14A (101 aa).

The interval 29–60 (EIIRSPRSTPEQRTAAQNELAHQPRDASAVRV) is disordered. The span at 34 to 45 (PRSTPEQRTAAQ) shows a compositional bias: polar residues.

This sequence belongs to the universal ribosomal protein uS14 family. In terms of assembly, part of the 30S ribosomal subunit. Contacts proteins S3 and S10.

Functionally, binds 16S rRNA, required for the assembly of 30S particles and may also be responsible for determining the conformation of the 16S rRNA at the A site. In Mycolicibacterium paratuberculosis (strain ATCC BAA-968 / K-10) (Mycobacterium paratuberculosis), this protein is Small ribosomal subunit protein uS14A.